A 288-amino-acid polypeptide reads, in one-letter code: dTDP-4-keto-6-deoxy-D-glucose reductase (288 aa).

Residues 12 to 14 (GML), 38 to 39 (DI), 62 to 64 (AWT), tyrosine 127, and lysine 131 contribute to the NADH site. NADPH-binding positions include 13–14 (ML), 38–39 (DI), 62–64 (AWT), tyrosine 127, and lysine 131. Tyrosine 127 (proton donor/acceptor) is an active-site residue.

The protein belongs to the dTDP-4-dehydrorhamnose reductase family. The cofactor is Mg(2+).

It functions in the pathway antibiotic biosynthesis; novobiocin biosynthesis. Functionally, reduces the product formed from the reaction of NovW with dTDP-4-keto-6-deoxy-D-glucose to result in dTDP-5-methyl-L-rhamnose in the novobiocin biosynthesis pathway, an aminocoumarin family antibiotic that targets bacterial DNA gyrases. The chain is dTDP-4-keto-6-deoxy-D-glucose reductase (novS) from Streptomyces niveus (Streptomyces spheroides).